Consider the following 112-residue polypeptide: Nucleoid-associated protein FTW_0607 (112 aa).

Positions 1 to 27 (MNFDMSKLMQQAQKMQEQMKKAQQERE) are disordered. A compositionally biased stretch (basic and acidic residues) spans 17–27 (EQMKKAQQERE).

This sequence belongs to the YbaB/EbfC family. Homodimer.

It localises to the cytoplasm. The protein localises to the nucleoid. In terms of biological role, binds to DNA and alters its conformation. May be involved in regulation of gene expression, nucleoid organization and DNA protection. The sequence is that of Nucleoid-associated protein FTW_0607 from Francisella tularensis subsp. tularensis (strain WY96-3418).